Here is a 330-residue protein sequence, read N- to C-terminus: Interleukin-12 subunit beta (330 aa).

Positions 1-22 (MHPQQLVVSWFSLVLLASPIMA) are cleaved as a signal peptide. Residues 23-106 (IWELEKNVYV…LSHSLLLLHK (84 aa)) form the Ig-like C2-type domain. Cysteine 50 and cysteine 90 are disulfide-bonded. Residues asparagine 136 and asparagine 224 are each glycosylated (N-linked (GlcNAc...) asparagine). Positions 239-330 (PPKNLQLKPL…WSEWASVSCS (92 aa)) constitute a Fibronectin type-III domain.

This sequence belongs to the IL-12B family. In terms of assembly, heterodimer with IL12A; disulfide-linked. The heterodimer is known as interleukin IL-12. Heterodimer with IL23A; disulfide-linked. The heterodimer is known as interleukin IL-23. Also secreted as a monomer. Interacts with NBR1; this interaction promotes IL-12 secretion.

The protein resides in the secreted. Its function is as follows. Cytokine that can act as a growth factor for activated T and NK cells, enhance the lytic activity of NK/lymphokine-activated killer cells, and stimulate the production of IFN-gamma by resting PBMC. Functionally, associates with IL23A to form the IL-23 interleukin, a heterodimeric cytokine which functions in innate and adaptive immunity. IL-23 may constitute with IL-17 an acute response to infection in peripheral tissues. IL-23 binds to a heterodimeric receptor complex composed of IL12RB1 and IL23R, activates the Jak-Stat signaling cascade, stimulates memory rather than naive T-cells and promotes production of pro-inflammatory cytokines. IL-23 induces autoimmune inflammation and thus may be responsible for autoimmune inflammatory diseases and may be important for tumorigenesis. This is Interleukin-12 subunit beta (IL12B) from Lama glama (Llama).